The chain runs to 557 residues: Formate--tetrahydrofolate ligase 2 (557 aa).

66 to 73 (TPAGEGKT) provides a ligand contact to ATP.

The protein belongs to the formate--tetrahydrofolate ligase family.

The catalysed reaction is (6S)-5,6,7,8-tetrahydrofolate + formate + ATP = (6R)-10-formyltetrahydrofolate + ADP + phosphate. It participates in one-carbon metabolism; tetrahydrofolate interconversion. This Streptococcus pyogenes serotype M5 (strain Manfredo) protein is Formate--tetrahydrofolate ligase 2.